Consider the following 573-residue polypeptide: Solute carrier family 41 member 2 (573 aa).

The Extracellular portion of the chain corresponds to 1–162 (MTNSKGRSIT…KESSGIMALQ (162 aa)). 2 positions are modified to phosphoserine: serine 136 and serine 137. Residues 163–183 (ILVPFLLAGFGTVSAGMVLDI) form a helical membrane-spanning segment. At 184 to 195 (VQHWEVFRKVTE) the chain is on the cytoplasmic side. The chain crosses the membrane as a helical span at residues 196–216 (VFILVPALLGLKGNLEMTLAS). Over 217 to 245 (RLSTAVNIGKMDSPIEKWNLIIGNLALKQ) the chain is Extracellular. Residues 246–266 (VQATVVGFLAAVAAIILGWIP) form a helical membrane-spanning segment. Residues 267 to 282 (EGKYYLDHSILLCSSS) are Cytoplasmic-facing. Residues 283-303 (VATAFIASLLQGIIMVGVIVG) form a helical membrane-spanning segment. The Extracellular portion of the chain corresponds to 304–313 (SKKTGINPDN). A helical membrane pass occupies residues 314–334 (VATPIAASFGDLITLAILAWI). Topologically, residues 335 to 347 (SQGLYSCLETYYY) are cytoplasmic. A helical membrane pass occupies residues 348-368 (ISPLVGVFFLALTPIWIIIAA). The Extracellular portion of the chain corresponds to 369–376 (KHPATRTV). The helical transmembrane segment at 377–397 (LHSGWEPVITAMVISSIGGLI) threads the bilayer. At 398-406 (LDTTVSDPN) the chain is on the cytoplasmic side. A helical membrane pass occupies residues 407–427 (LVGIVVYTPVINGIGGNLVAI). At 428-469 (QASRISTYLHLHSIPGELPDEPKGCYYPFRTFFGPGVNNKSA) the chain is on the extracellular side. The helical transmembrane segment at 470 to 490 (QVLLLLVIPGHLIFLYTIHLM) threads the bilayer. Residues 491 to 498 (KSGHTSLT) lie on the Cytoplasmic side of the membrane. Residues 499–519 (IIFIVVYLFAAVLQVFTLLWI) form a helical membrane-spanning segment. Residues 520 to 543 (ADWMVHHFWRKGKDPDSFSIPYLT) lie on the Extracellular side of the membrane. A helical transmembrane segment spans residues 544-564 (ALGDLLGTALLALSFHFLWLI). At 565–573 (GDRDGDVGD) the chain is on the cytoplasmic side.

It belongs to the SLC41A transporter family.

It localises to the cell membrane. The enzyme catalyses Mg(2+)(in) = Mg(2+)(out). It carries out the reaction Mn(2+)(in) = Mn(2+)(out). It catalyses the reaction Co(2+)(in) = Co(2+)(out). The catalysed reaction is Ni(2+)(in) = Ni(2+)(out). The enzyme catalyses Fe(2+)(in) = Fe(2+)(out). Its function is as follows. Acts as a plasma-membrane magnesium transporter. Can also mediate the transport of other divalent metal cations in an order of Ba(2+) &gt; Ni(2+) &gt; Co(2+) &gt; Fe(2+) &gt; Mn(2+). This is Solute carrier family 41 member 2 (SLC41A2) from Macaca fascicularis (Crab-eating macaque).